The sequence spans 379 residues: MFGMLRALKTHVEVPIVVATRAASTNAEKLEEIRERLAKGPNFQDFVQNPDNSRSEWENYEGKLRREKGEEQRLRLPPWLKTTIPVGKNYAKIKAQMRELKLSTVCEEARCPNIGECWGGGEHGTQTATIMLMGDTCTRGCRFCSVKTARKPPPLDVNEPVNTATAIASWGLDYIVLTSVDRDDLPDGGSKHIAETVREIKARNSNIFVECLVPDFRGNLECVETIANSGLDVYAHNIETVEKLTPYVRDRRAHYRQTLQVLTEAKRFNPNLITKSSIMLGLGETDEEIESTLKDLRTAGVDCVTLGQYMQPTNKHLKVIEYVTPEKFKHWEERGNELGFLYTASGPLVRSSYKAGEFFITSILENRKKRQNATELSKE.

Positions 106, 111, 117, 137, 141, 144, and 352 each coordinate [4Fe-4S] cluster. In terms of domain architecture, Radical SAM core spans 122-341 (EHGTQTATIM…EERGNELGFL (220 aa)).

It belongs to the radical SAM superfamily. Lipoyl synthase family. [4Fe-4S] cluster serves as cofactor.

It is found in the mitochondrion. It catalyses the reaction [[Fe-S] cluster scaffold protein carrying a second [4Fe-4S](2+) cluster] + N(6)-octanoyl-L-lysyl-[protein] + 2 oxidized [2Fe-2S]-[ferredoxin] + 2 S-adenosyl-L-methionine + 4 H(+) = [[Fe-S] cluster scaffold protein] + N(6)-[(R)-dihydrolipoyl]-L-lysyl-[protein] + 4 Fe(3+) + 2 hydrogen sulfide + 2 5'-deoxyadenosine + 2 L-methionine + 2 reduced [2Fe-2S]-[ferredoxin]. It participates in protein modification; protein lipoylation via endogenous pathway; protein N(6)-(lipoyl)lysine from octanoyl-[acyl-carrier-protein]: step 2/2. Functionally, catalyzes the radical-mediated insertion of two sulfur atoms into the C-6 and C-8 positions of the octanoyl moiety bound to the lipoyl domains of lipoate-dependent enzymes, thereby converting the octanoylated domains into lipoylated derivatives. The sequence is that of Lipoyl synthase 2, mitochondrial from Drosophila yakuba (Fruit fly).